Reading from the N-terminus, the 304-residue chain is UDP-N-acetylenolpyruvoylglucosamine reductase (304 aa).

Residues 31-196 enclose the FAD-binding PCMH-type domain; sequence RVGGPAERFY…VAAELELAPG (166 aa). The active site involves Arg-176. The Proton donor role is filled by Ser-225. Glu-295 is an active-site residue.

The protein belongs to the MurB family. FAD serves as cofactor.

Its subcellular location is the cytoplasm. It catalyses the reaction UDP-N-acetyl-alpha-D-muramate + NADP(+) = UDP-N-acetyl-3-O-(1-carboxyvinyl)-alpha-D-glucosamine + NADPH + H(+). It functions in the pathway cell wall biogenesis; peptidoglycan biosynthesis. In terms of biological role, cell wall formation. This Methylococcus capsulatus (strain ATCC 33009 / NCIMB 11132 / Bath) protein is UDP-N-acetylenolpyruvoylglucosamine reductase.